The primary structure comprises 128 residues: Small ribosomal subunit protein uS9 (128 aa).

This sequence belongs to the universal ribosomal protein uS9 family. As to quaternary structure, part of the 30S ribosomal subunit. Contacts proteins S7 and S10.

Functionally, part of the top of the head of the 30S subunit. The C-terminal region penetrates the head emerging in the P-site where it contacts tRNA. This chain is Small ribosomal subunit protein uS9 (rpsI), found in Thermus thermophilus (strain ATCC BAA-163 / DSM 7039 / HB27).